Consider the following 541-residue polypeptide: Light-independent protochlorophyllide reductase subunit B (541 aa).

Residue Asp-36 coordinates [4Fe-4S] cluster. Catalysis depends on Asp-286, which acts as the Proton donor. 421–422 lines the substrate pocket; it reads GM.

The protein belongs to the ChlB/BchB/BchZ family. In terms of assembly, protochlorophyllide reductase is composed of three subunits; BchL, BchN and BchB. Forms a heterotetramer of two BchB and two BchN subunits. [4Fe-4S] cluster serves as cofactor.

The enzyme catalyses chlorophyllide a + oxidized 2[4Fe-4S]-[ferredoxin] + 2 ADP + 2 phosphate = protochlorophyllide a + reduced 2[4Fe-4S]-[ferredoxin] + 2 ATP + 2 H2O. Its pathway is porphyrin-containing compound metabolism; bacteriochlorophyll biosynthesis (light-independent). Component of the dark-operative protochlorophyllide reductase (DPOR) that uses Mg-ATP and reduced ferredoxin to reduce ring D of protochlorophyllide (Pchlide) to form chlorophyllide a (Chlide). This reaction is light-independent. The NB-protein (BchN-BchB) is the catalytic component of the complex. The protein is Light-independent protochlorophyllide reductase subunit B of Chloroflexus aurantiacus (strain ATCC 29364 / DSM 637 / Y-400-fl).